A 399-amino-acid polypeptide reads, in one-letter code: MTSKMENNKDESISTKNALEEKSNETKDETSKRKHDPAEEESAVSTKVSKSEPLEDKGNAEVKEFKETTKSNGVKPEVEITESTKIQKESNTEPCISTGGKVEEKELKVNKDVDENEGHVAVETGKKESAAKPAASVSPFSQFASFSNASSPFSNVSTASSEPKEEKSAFGAFASSKSAFTMKSVKDSPFKKFAAGTAVETESGSGKEKENDKKSSENFDELLANTSAKAFENQKGSAGETKSEPKEADKGSGDSTKSTMHQLSDSEIITGEEEEESIFSVRARLYVVADEKKTWKERGQGILKVNVPKQRGSGSGRLLMRNDAVHRVIMNVPLFQGMSKKSLQIASASSGGSANYLKIFVIENGKSVLYAVRVKDNSLAEQLRNHVLEAIPKGGREDA.

3 stretches are compositionally biased toward basic and acidic residues: residues 1 to 31 (MTSK…DETS), 49 to 69 (SKSE…KETT), and 101 to 130 (KVEE…KESA). 2 disordered regions span residues 1–173 (MTSK…FGAF) and 191–269 (KKFA…SEII). Low complexity predominate over residues 138-157 (SPFSQFASFSNASSPFSNVS). 2 stretches are compositionally biased toward basic and acidic residues: residues 205–217 (SGKE…KSSE) and 241–252 (TKSEPKEADKGS). Polar residues predominate over residues 253 to 263 (GDSTKSTMHQL). The region spanning 256–396 (TKSTMHQLSD…VLEAIPKGGR (141 aa)) is the RanBD1 domain.

Post-translationally, phosphorylated.

Its subcellular location is the nucleus. The polypeptide is Brefeldin A resistance protein (hba1) (Schizosaccharomyces pombe (strain 972 / ATCC 24843) (Fission yeast)).